A 524-amino-acid chain; its full sequence is Ribonuclease Y (524 aa).

Residues 3-23 (IVINLFLIIFASVVFFAAGFF) traverse the membrane as a helical segment. The region spanning 214-274 (ALSVVHIQSD…LRREHAKLTL (61 aa)) is the KH domain. Residues 340–432 (LLQHSREVAM…VDAANVISLA (93 aa)) form the HD domain.

The protein belongs to the RNase Y family.

It is found in the cell membrane. Its function is as follows. Endoribonuclease that initiates mRNA decay. The sequence is that of Ribonuclease Y from Chlorobium luteolum (strain DSM 273 / BCRC 81028 / 2530) (Pelodictyon luteolum).